The sequence spans 119 residues: Large ribosomal subunit protein uL18 (119 aa).

Belongs to the universal ribosomal protein uL18 family. In terms of assembly, part of the 50S ribosomal subunit; part of the 5S rRNA/L5/L18/L25 subcomplex. Contacts the 5S and 23S rRNAs.

Its function is as follows. This is one of the proteins that bind and probably mediate the attachment of the 5S RNA into the large ribosomal subunit, where it forms part of the central protuberance. The sequence is that of Large ribosomal subunit protein uL18 from Solibacter usitatus (strain Ellin6076).